The following is a 349-amino-acid chain: Twinfilin-2 (349 aa).

ADF-H domains are found at residues 4 to 139 (QTGI…KHVS) and 177 to 313 (GLAF…DEVH). Positions 324–349 (AKPKGPVGKRGQKRLIKGPGENGEDS) are disordered.

Belongs to the actin-binding proteins ADF family. Twinfilin subfamily. Interacts with G-actin; ADP-actin form and capping protein (CP).

It localises to the cytoplasm. The protein resides in the cytoskeleton. Its subcellular location is the perinuclear region. In terms of biological role, actin-binding protein involved in motile and morphological processes. Inhibits actin polymerization, likely by sequestering G-actin. The polypeptide is Twinfilin-2 (TWF2) (Gallus gallus (Chicken)).